We begin with the raw amino-acid sequence, 1056 residues long: ISWI chromatin-remodeling complex ATPase CHR11 (1056 aa).

Residues Met-1–Ala-10 show a composition bias toward low complexity. Disordered regions lie at residues Met-1 to Glu-80 and Lys-133 to Asn-175. Acidic residues-rich tracts occupy residues Phe-11 to Glu-32 and Pro-60 to Lys-73. Residues Ser-12 to Ser-105 are a coiled coil. Residues Lys-141–Ser-151 show a composition bias toward basic residues. A compositionally biased stretch (acidic residues) spans Glu-155–Gly-169. The Helicase ATP-binding domain occupies Ile-201–Glu-366. Asp-214–Thr-221 provides a ligand contact to ATP. Residues Asp-317 to His-320 carry the DEAH box motif. Residues Leu-494–Ala-645 enclose the Helicase C-terminal domain. 2 disordered regions span residues Trp-738–Pro-774 and Ile-814–Glu-833. Over residues Asp-815–Glu-833 the composition is skewed to acidic residues. SANT domains lie at Glu-840 to Lys-892 and Gln-941 to Ile-1002. The segment at Glu-1011–Arg-1056 is disordered. Basic residues predominate over residues Thr-1047–Arg-1056.

It belongs to the SNF2/RAD54 helicase family. ISWI subfamily. Interacts with RLT1 and RLT2. Interacts (via C-terminus) with RLT1 (via the DDT domain), RLT2 (via the DDT domain), PTM (via the DDT domain) and DDR4 (via the DDT domain). Binds to FGT1. As to expression, highly expressed in growing tissues such as inflorescence and flower meristems, young leaves and floral organs. Expressed in roots, rosette and cauline leaves, stems, flowers, inflorescences and siliques.

The protein localises to the nucleus. Its function is as follows. Possesses intrinsic ATP-dependent nucleosome-remodeling activity. Constitutes the catalytic subunit of several complexes capable of forming ordered nucleosome arrays on chromatin. Involved in the formation of nucleosome distribution patterns. Involved in nuclear proliferation during megagametogenesis and cell expansion in the sporophyte. Required for the maintenance of the plant vegetative phase. In association with RLT1 or RLT2 may prevent the early activation of the vegetative-to-reproductive transition by regulating key genes that contribute to flower timing, such as FT, SEP1, SEP3, AGL8/FUL, SOC1 and FLC. Necessary to acquire heat stress (HS) memory. This is ISWI chromatin-remodeling complex ATPase CHR11 from Arabidopsis thaliana (Mouse-ear cress).